The sequence spans 521 residues: Bifunctional purine biosynthesis protein PurH (521 aa).

Residues 1–147 (MAKISRALIS…KNNADVTVLV (147 aa)) enclose the MGS-like domain.

The protein belongs to the PurH family.

It catalyses the reaction (6R)-10-formyltetrahydrofolate + 5-amino-1-(5-phospho-beta-D-ribosyl)imidazole-4-carboxamide = 5-formamido-1-(5-phospho-D-ribosyl)imidazole-4-carboxamide + (6S)-5,6,7,8-tetrahydrofolate. The catalysed reaction is IMP + H2O = 5-formamido-1-(5-phospho-D-ribosyl)imidazole-4-carboxamide. It functions in the pathway purine metabolism; IMP biosynthesis via de novo pathway; 5-formamido-1-(5-phospho-D-ribosyl)imidazole-4-carboxamide from 5-amino-1-(5-phospho-D-ribosyl)imidazole-4-carboxamide (10-formyl THF route): step 1/1. It participates in purine metabolism; IMP biosynthesis via de novo pathway; IMP from 5-formamido-1-(5-phospho-D-ribosyl)imidazole-4-carboxamide: step 1/1. This chain is Bifunctional purine biosynthesis protein PurH, found in Geotalea daltonii (strain DSM 22248 / JCM 15807 / FRC-32) (Geobacter daltonii).